The chain runs to 208 residues: Superoxide dismutase [Mn] 2 (208 aa).

His-28, His-83, Asp-165, and His-169 together coordinate Mn(2+).

It belongs to the iron/manganese superoxide dismutase family. Homodimer. It depends on Mn(2+) as a cofactor.

It carries out the reaction 2 superoxide + 2 H(+) = H2O2 + O2. Its function is as follows. Destroys superoxide anion radicals which are normally produced within the cells and which are toxic to biological systems. The polypeptide is Superoxide dismutase [Mn] 2 (sodA2) (Bacillus anthracis).